The primary structure comprises 357 residues: MSKQILILPGDGIGPEIMAEAVKVLKRIDAQHGLGFQLVYDELGGTAYDKYGSPLADETLERARGADAVLLGAVGGPQWDTIDPALRPERGLLKIRSQLGLFANLRPALLYPQLADASTLKPEVVAGLDLLILRELTGGIYFGQPRGNRTLDNGERQAYDTLPYSESEIRRIAKAGFDMARLRGKKLCSVDKANVLASSQLWRAVVEEVAKDYPDIALSHMYVDNAAMQLVRAPKQFDVIVTDNMFGDILSDQASMLTGSIGMLPSASLDANSKGMYEPCHGSAPDIAGKGIANPLATILSVAMMLRYTFARATAADAIEHAVGKVLDQGLRTADIWSEGTTKVGTVAMGDAVVAAL.

Gly76 to Glu89 contacts NAD(+). Residues Arg96, Arg106, Arg134, and Asp224 each coordinate substrate. Mg(2+) contacts are provided by Asp224, Asp248, and Asp252. NAD(+) is bound at residue Gly282 to Asn294.

This sequence belongs to the isocitrate and isopropylmalate dehydrogenases family. LeuB type 1 subfamily. In terms of assembly, homodimer. Mg(2+) serves as cofactor. The cofactor is Mn(2+).

It is found in the cytoplasm. It carries out the reaction (2R,3S)-3-isopropylmalate + NAD(+) = 4-methyl-2-oxopentanoate + CO2 + NADH. It functions in the pathway amino-acid biosynthesis; L-leucine biosynthesis; L-leucine from 3-methyl-2-oxobutanoate: step 3/4. Catalyzes the oxidation of 3-carboxy-2-hydroxy-4-methylpentanoate (3-isopropylmalate) to 3-carboxy-4-methyl-2-oxopentanoate. The product decarboxylates to 4-methyl-2 oxopentanoate. This Xanthomonas axonopodis pv. citri (strain 306) protein is 3-isopropylmalate dehydrogenase.